Here is a 75-residue protein sequence, read N- to C-terminus: UPF0270 protein PputGB1_1339 (75 aa).

Belongs to the UPF0270 family.

In Pseudomonas putida (strain GB-1), this protein is UPF0270 protein PputGB1_1339.